The primary structure comprises 248 residues: NADP-dependent 3-hydroxy acid dehydrogenase YdfG (248 aa).

Residues 7–12 (GATAGF), 32–33 (RR), 54–55 (DV), and N81 each bind NADP(+). S134 is a substrate binding site. Residues Y147, K151, and 177-185 (PGLVGGTEF) contribute to the NADP(+) site. The active-site Proton acceptor is Y147.

Belongs to the short-chain dehydrogenases/reductases (SDR) family. As to quaternary structure, homotetramer.

It carries out the reaction 3-hydroxypropanoate + NADP(+) = 3-oxopropanoate + NADPH + H(+). The catalysed reaction is L-allo-threonine + NADP(+) = aminoacetone + CO2 + NADPH. NADP-dependent dehydrogenase with broad substrate specificity acting on 3-hydroxy acids. Catalyzes the NADP-dependent oxidation of L-allo-threonine to L-2-amino-3-keto-butyrate, which is spontaneously decarboxylated into aminoacetone. Also acts on D-threonine, L-serine, D-serine, D-3-hydroxyisobutyrate, L-3-hydroxyisobutyrate, D-glycerate and L-glycerate. Able to catalyze the reduction of the malonic semialdehyde to 3-hydroxypropionic acid. YdfG is apparently supplementing RutE, the presumed malonic semialdehyde reductase involved in pyrimidine degradation since both are able to detoxify malonic semialdehyde. The chain is NADP-dependent 3-hydroxy acid dehydrogenase YdfG from Shigella flexneri.